The primary structure comprises 448 residues: Tryptamine benzoyltransferase 2 (448 aa).

Residues Met1 to Leu20 are disordered. Residues His155 and Asp386 each act as proton acceptor in the active site.

Belongs to the plant acyltransferase family.

Functionally, hydroxycinnamoyl transferase that catalyzes the transfer of an acyl from benzoyl-CoA to tryptamine, to produce benzoyl tryptamine. Serotonin and tyramine serve as acyl acceptors in vitro. Specific for benzoyl-CoA as acyl donor. Has no activity with p-coumaroyl-CoA, caffeoyl-CoA, or feruloyl-CoA as acyl donors. This Oryza sativa subsp. japonica (Rice) protein is Tryptamine benzoyltransferase 2.